A 306-amino-acid polypeptide reads, in one-letter code: D-alanine--D-alanine ligase (306 aa).

Positions 101–303 constitute an ATP-grasp domain; sequence KQVWQAVGLP…FSQLVVKILE (203 aa). 134-189 contributes to the ATP binding site; that stretch reads FTHLGLPLIVKPSREGSSVGMSKVNTLSDLPAALEEAFRHDDDVLVEKWLSGPEYT. Asp257, Glu270, and Asn272 together coordinate Mg(2+).

The protein belongs to the D-alanine--D-alanine ligase family. It depends on Mg(2+) as a cofactor. Mn(2+) is required as a cofactor.

It localises to the cytoplasm. It catalyses the reaction 2 D-alanine + ATP = D-alanyl-D-alanine + ADP + phosphate + H(+). It functions in the pathway cell wall biogenesis; peptidoglycan biosynthesis. Cell wall formation. This chain is D-alanine--D-alanine ligase, found in Pectobacterium atrosepticum (strain SCRI 1043 / ATCC BAA-672) (Erwinia carotovora subsp. atroseptica).